The following is a 295-amino-acid chain: 4-diphosphocytidyl-2-C-methyl-D-erythritol kinase (295 aa).

Lys10 is a catalytic residue. ATP is bound at residue 97–107; the sequence is PIGSGLGGASS. Asp139 is a catalytic residue.

It belongs to the GHMP kinase family. IspE subfamily. As to quaternary structure, homodimer.

It carries out the reaction 4-CDP-2-C-methyl-D-erythritol + ATP = 4-CDP-2-C-methyl-D-erythritol 2-phosphate + ADP + H(+). It participates in isoprenoid biosynthesis; isopentenyl diphosphate biosynthesis via DXP pathway; isopentenyl diphosphate from 1-deoxy-D-xylulose 5-phosphate: step 3/6. In terms of biological role, catalyzes the phosphorylation of the position 2 hydroxy group of 4-diphosphocytidyl-2C-methyl-D-erythritol. The chain is 4-diphosphocytidyl-2-C-methyl-D-erythritol kinase from Blochmanniella pennsylvanica (strain BPEN).